Reading from the N-terminus, the 494-residue chain is Tripartite motif-containing protein 5 (494 aa).

Ala-2 is subject to N-acetylalanine. The RING-type zinc finger occupies 15 to 59; it reads CPICLELLTEPLSLDCGHSFCQACITANHKESMLHQGERSCPLCR. The B box-type zinc-finger motif lies at 91–132; it reads QNVDHCARHGEKLLLFCEQDGNIICWLCERSQEHRGHNTFLV. Zn(2+)-binding residues include Cys-96, His-99, Cys-118, and His-124. The stretch at 132–223 forms a coiled coil; that stretch reads VEEVAQKYRE…RLVQSENDMV (92 aa). Residues 186–199 form a required for interaction with GABARAP and for autophagy region; sequence FKQLRDILDCEESN. The 215-residue stretch at 280 to 494 folds into the B30.2/SPRY domain; the sequence is PDLKRMLQVL…LPMTLCSPSS (215 aa).

It belongs to the TRIM/RBCC family. As to quaternary structure, can form homodimers and homotrimers. In addition to lower-order dimerization, also exhibits a higher-order multimerization and both low- and high-order multimerizations are essential for its restriction activity. Interacts with BTBD1 and BTBD2. Interacts with PSMC4, PSMC5, PSMD7 and HSPA8/HSC70. Interacts (via B30.2/SPRY domain) with HSPA1A/B. Interacts with PSMC2, MAP3K7/TAK1, TAB2 and TAB3. Interacts with SQSTM1. Interacts with TRIM6 and TRIM34. Interacts with ULK1 (phosphorylated form), GABARAP, GABARAPL1, GABARAPL2, MAP1LC3A, MAP1LC3C and BECN1. Post-translationally, degraded in a proteasome-independent fashion in the absence of viral infection but in a proteasome-dependent fashion following exposure to restriction sensitive virus. Autoubiquitinated in a RING finger- and UBE2D2-dependent manner. Monoubiquitinated by TRIM21. Deubiquitinated by Yersinia YopJ. Ubiquitination may not lead to proteasomal degradation.

The protein localises to the cytoplasm. It localises to the nucleus. It carries out the reaction S-ubiquitinyl-[E2 ubiquitin-conjugating enzyme]-L-cysteine + [acceptor protein]-L-lysine = [E2 ubiquitin-conjugating enzyme]-L-cysteine + N(6)-ubiquitinyl-[acceptor protein]-L-lysine.. Its pathway is protein modification; protein ubiquitination. In terms of biological role, capsid-specific restriction factor that prevents infection from non-host-adapted retroviruses. Blocks viral replication early in the life cycle, after viral entry but before reverse transcription. In addition to acting as a capsid-specific restriction factor, also acts as a pattern recognition receptor that activates innate immune signaling in response to the retroviral capsid lattice. Binding to the viral capsid triggers its E3 ubiquitin ligase activity, and in concert with the heterodimeric ubiquitin conjugating enzyme complex UBE2V1-UBE2N (also known as UBC13-UEV1A complex) generates 'Lys-63'-linked polyubiquitin chains, which in turn are catalysts in the autophosphorylation of the MAP3K7/TAK1 complex (includes TAK1, TAB2, and TAB3). Activation of the MAP3K7/TAK1 complex by autophosphorylation results in the induction and expression of NF-kappa-B and MAPK-responsive inflammatory genes, thereby leading to an innate immune response in the infected cell. Plays a role in regulating autophagy through activation of autophagy regulator BECN1 by causing its dissociation from its inhibitors BCL2 and TAB2. This chain is Tripartite motif-containing protein 5 (TRIM5), found in Saimiri boliviensis boliviensis (Bolivian squirrel monkey).